Here is a 211-residue protein sequence, read N- to C-terminus: Probable nicotinate-nucleotide adenylyltransferase (211 aa).

Belongs to the NadD family.

It carries out the reaction nicotinate beta-D-ribonucleotide + ATP + H(+) = deamido-NAD(+) + diphosphate. Its pathway is cofactor biosynthesis; NAD(+) biosynthesis; deamido-NAD(+) from nicotinate D-ribonucleotide: step 1/1. Catalyzes the reversible adenylation of nicotinate mononucleotide (NaMN) to nicotinic acid adenine dinucleotide (NaAD). The sequence is that of Probable nicotinate-nucleotide adenylyltransferase from Thermoanaerobacter sp. (strain X514).